Reading from the N-terminus, the 556-residue chain is Formate--tetrahydrofolate ligase 1 (556 aa).

ATP is bound at residue 65–72; sequence TPAGEGKT.

The protein belongs to the formate--tetrahydrofolate ligase family.

The enzyme catalyses (6S)-5,6,7,8-tetrahydrofolate + formate + ATP = (6R)-10-formyltetrahydrofolate + ADP + phosphate. It participates in one-carbon metabolism; tetrahydrofolate interconversion. The sequence is that of Formate--tetrahydrofolate ligase 1 from Desulfitobacterium hafniense (strain Y51).